Consider the following 118-residue polypeptide: Large ribosomal subunit protein bL20 (118 aa).

Belongs to the bacterial ribosomal protein bL20 family.

Functionally, binds directly to 23S ribosomal RNA and is necessary for the in vitro assembly process of the 50S ribosomal subunit. It is not involved in the protein synthesizing functions of that subunit. The chain is Large ribosomal subunit protein bL20 from Sulfurimonas denitrificans (strain ATCC 33889 / DSM 1251) (Thiomicrospira denitrificans (strain ATCC 33889 / DSM 1251)).